The following is a 315-amino-acid chain: Calumenin-A (315 aa).

The signal sequence occupies residues 1-19 (MEIRPLLMCFALCVVYATS). 6 consecutive EF-hand domains span residues 68–103 (ESKR…AQKK), 104–139 (YIYE…TYLD), 151–186 (HMMA…EEYD), 188–223 (MKDI…HEDE), 229–264 (WVAT…SDYD), and 265–300 (HAEA…FVGS). Positions 81, 83, 85, 92, 117, 119, 121, 123, and 128 each coordinate Ca(2+). An N-linked (GlcNAc...) asparagine glycan is attached at Asn131. The Ca(2+) site is built by Asp164, Asn166, Asp168, Glu175, Asp201, Asn203, Asp205, Glu212, Asp242, Asn244, Asp246, Lys248, Glu253, Asp278, Asn280, Asp282, Lys284, and Glu289. A Prevents secretion from ER motif is present at residues 312-315 (HDEF).

The protein belongs to the CREC family. Interacts with ggcx.

It is found in the endoplasmic reticulum membrane. The protein localises to the golgi apparatus. Its subcellular location is the secreted. It localises to the melanosome. The protein resides in the sarcoplasmic reticulum lumen. Involved in regulation of vitamin K-dependent carboxylation of multiple N-terminal glutamate residues. Seems to inhibit gamma-carboxylase ggcx. Binds 7 calcium ions with a low affinity. The polypeptide is Calumenin-A (calua) (Salmo salar (Atlantic salmon)).